A 380-amino-acid chain; its full sequence is Cytochrome b (380 aa).

4 consecutive transmembrane segments (helical) span residues 33-53 (FGSL…FLAM), 77-98 (WLIR…YLHI), 113-133 (WNVG…GYVL), and 178-198 (FFAF…IHLL). Positions 83 and 97 each coordinate heme b. Heme b-binding residues include H182 and H196. Residue H201 coordinates a ubiquinone. Helical transmembrane passes span 226 to 246 (YKDL…ALFS), 288 to 308 (LGGV…PILH), 320 to 340 (ITQF…WIGG), and 347 to 367 (FIII…VLTP).

Belongs to the cytochrome b family. The cytochrome bc1 complex contains 3 respiratory subunits (MT-CYB, CYC1 and UQCRFS1), 2 core proteins (UQCRC1 and UQCRC2) and probably 6 low-molecular weight proteins. Heme b serves as cofactor.

The protein localises to the mitochondrion inner membrane. Its function is as follows. Component of the ubiquinol-cytochrome c reductase complex (complex III or cytochrome b-c1 complex) that is part of the mitochondrial respiratory chain. The b-c1 complex mediates electron transfer from ubiquinol to cytochrome c. Contributes to the generation of a proton gradient across the mitochondrial membrane that is then used for ATP synthesis. This is Cytochrome b (mt-cyb) from Dactyloptena peterseni (Starry flying gurnard).